We begin with the raw amino-acid sequence, 95 residues long: NELL2-interacting cell ontogeny regulator 1 (95 aa).

Positions methionine 1–alanine 34 are cleaved as a signal peptide.

This sequence belongs to the NICOL family. Interacts with NELL2; triggers epididymal differentiation. Interacts with cell surface receptor TFRC; the interaction mediates uptake of NICOL1 into fibroblasts. As to expression, detected in the brain (at protein level). Also expressed at low levels in the kidney, primarily in tubular epithelial cells.

Its subcellular location is the secreted. It is found in the cytoplasm. It localises to the perinuclear region. MRNA-binding protein which interacts with a range of target mRNAs including SERPINE1, ACTA2, CCN2 and COL4A1 and may promote extracellular matrix production. Binds to the 3'-UTR of SERPINE1 mRNA and stabilizes the mRNA, possibly by competing for binding with SERBP1 and preventing SERBP1-mediated mRNA degradation. Also binds to the 3'-UTR of ACTA2. Testis-derived lumicrine factor that triggers epididymal differentiation and sperm maturation. The polypeptide is NELL2-interacting cell ontogeny regulator 1 (Homo sapiens (Human)).